A 737-amino-acid polypeptide reads, in one-letter code: Dynein axonemal intermediate chain 7 homolog (737 aa).

A compositionally biased stretch (polar residues) spans 1–15; it reads MPPKSPNRSGKSTPT. 3 disordered regions span residues 1 to 61, 274 to 362, and 410 to 452; these read MPPK…ERRA, KKVK…DDEE, and STVK…QQPP. Composition is skewed to basic and acidic residues over residues 18-61, 276-316, and 333-349; these read RPGE…ERRA, VKDE…EGRQ, and EETK…DAVK. 2 stretches are compositionally biased toward polar residues: residues 417-429 and 441-451; these read DNPN…SRVA and PSKTPLEQQQP.

Belongs to the DNAI7 family.

The protein is Dynein axonemal intermediate chain 7 homolog (AXP83.9) of Ciona intestinalis (Transparent sea squirt).